The primary structure comprises 321 residues: Glucokinase (321 aa).

Glycine 8–threonine 13 is an ATP binding site.

Belongs to the bacterial glucokinase family.

Its subcellular location is the cytoplasm. The enzyme catalyses D-glucose + ATP = D-glucose 6-phosphate + ADP + H(+). This is Glucokinase from Salmonella typhi.